A 433-amino-acid chain; its full sequence is Adenylosuccinate synthetase (433 aa).

GTP contacts are provided by residues 18–24 (GDEGKGK) and 46–48 (GHT). The Proton acceptor role is filled by aspartate 19. 2 residues coordinate Mg(2+): aspartate 19 and glycine 46. IMP is bound by residues 19 to 22 (DEGK), 44 to 47 (NAGH), threonine 136, arginine 150, glutamine 229, threonine 244, and arginine 308. Catalysis depends on histidine 47, which acts as the Proton donor. 304-310 (VTTKRMR) contacts substrate. Residues arginine 310, 336 to 338 (KID), and 420 to 422 (GTG) contribute to the GTP site.

This sequence belongs to the adenylosuccinate synthetase family. In terms of assembly, homodimer. Requires Mg(2+) as cofactor.

It is found in the cytoplasm. It catalyses the reaction IMP + L-aspartate + GTP = N(6)-(1,2-dicarboxyethyl)-AMP + GDP + phosphate + 2 H(+). Its pathway is purine metabolism; AMP biosynthesis via de novo pathway; AMP from IMP: step 1/2. Functionally, plays an important role in the de novo pathway and in the salvage pathway of purine nucleotide biosynthesis. Catalyzes the first committed step in the biosynthesis of AMP from IMP. This chain is Adenylosuccinate synthetase, found in Schistosoma japonicum (Blood fluke).